We begin with the raw amino-acid sequence, 305 residues long: MFDSDHNSIFQSDLCQRLVVHSILLTFLVILLCTSLYPSSAFIVGLLSSACAALGTYEMGAMVRIKFPFSFTRYSALGSAIFIALTCLTARCKMCFPEHIDLLPWFFLFFWTIRLVFKSRHYKLGPIGSTGLALFCMLYVSVPIRLFLHILYGFVHTDTPFVGIWWAIFLIATTKSSDIFGYFFGKAFGKKRIAPVISPNKTVVGFIAGCCGSILVSLLFYSHLPKAFADQIAVPWILIALGTVLGVSGFFGDIIESTFKRDAQIKNSSDLESIGGMLDVLDSLLLSTPIVYAILLITQNRTFLG.

The next 8 helical transmembrane spans lie at 27–47 (FLVI…VGLL), 67–87 (FPFS…ALTC), 96–116 (FPEH…IRLV), 124–144 (LGPI…SVPI), 150–170 (ILYG…AIFL), 202–222 (TVVG…LFYS), 232–252 (IAVP…GFFG), and 277–297 (MLDV…ILLI).

It belongs to the CDS family.

The protein localises to the cell membrane. It catalyses the reaction a 1,2-diacyl-sn-glycero-3-phosphate + CTP + H(+) = a CDP-1,2-diacyl-sn-glycerol + diphosphate. The protein operates within phospholipid metabolism; CDP-diacylglycerol biosynthesis; CDP-diacylglycerol from sn-glycerol 3-phosphate: step 3/3. In Chlamydia trachomatis serovar D (strain ATCC VR-885 / DSM 19411 / UW-3/Cx), this protein is Phosphatidate cytidylyltransferase (cdsA).